Reading from the N-terminus, the 855-residue chain is Valine--tRNA ligase (855 aa).

The short motif at 42–52 (PTISGKLHIGH) is the 'HIGH' region element. A 'KMSKS' region motif is present at residues 574 to 578 (KMSKS). Residue Lys-577 coordinates ATP.

This sequence belongs to the class-I aminoacyl-tRNA synthetase family. ValS type 2 subfamily. In terms of assembly, monomer.

It is found in the cytoplasm. It catalyses the reaction tRNA(Val) + L-valine + ATP = L-valyl-tRNA(Val) + AMP + diphosphate. In terms of biological role, catalyzes the attachment of valine to tRNA(Val). As ValRS can inadvertently accommodate and process structurally similar amino acids such as threonine, to avoid such errors, it has a 'posttransfer' editing activity that hydrolyzes mischarged Thr-tRNA(Val) in a tRNA-dependent manner. In Wolbachia sp. subsp. Brugia malayi (strain TRS), this protein is Valine--tRNA ligase.